We begin with the raw amino-acid sequence, 529 residues long: Glucose transporter 2A (529 aa).

The tract at residues 1 to 22 is disordered; sequence MTERRDNVSHAPDAIEGPNDGA. The Cytoplasmic segment spans residues 1–43; that stretch reads MTERRDNVSHAPDAIEGPNDGAHAEDTSPGFFSFENLGVAQVQ. A helical membrane pass occupies residues 44-64; sequence VVGGTLNGFSIGFVAVYILLY. At 65-119 the chain is on the extracellular side; the sequence is EVATNCSLFKTTEACKAVGSYGCEWKDTEVCSWKKECDSDSDGVNPCESLIGYSS. Residues 120-140 form a helical membrane-spanning segment; the sequence is LYSGIFASAMIVGSMVGSIIA. Residues 141–152 are Cytoplasmic-facing; sequence GKCITMFGLKKS. A helical transmembrane segment spans residues 153–173; the sequence is FIIVGVMSVVASALNHISVAT. At 174–175 the chain is on the extracellular side; sequence NE. A helical membrane pass occupies residues 176 to 196; that stretch reads FWVLCAGRVLMGIGLGVVCVI. The Cytoplasmic portion of the chain corresponds to 197-214; sequence CPMYVNENAHPKLSKVDG. The chain crosses the membrane as a helical span at residues 215 to 235; it reads VLFQVFITFGIMLAAMLGLIL. Residues 236-250 lie on the Extracellular side of the membrane; that stretch reads DKTVNYDNDPDMAGR. A helical membrane pass occupies residues 251 to 271; sequence FHGFCAVSSVLSVAMFLVGMF. Residues 272-300 lie on the Cytoplasmic side of the membrane; the sequence is LRESTATFSQDDDGKADGGMDPNEYGWGQ. Residues 301–321 form a helical membrane-spanning segment; that stretch reads MLWPLFMGAVTAGTLQLTGIN. At 322 to 339 the chain is on the extracellular side; it reads AVMNYAPKITENLGMDPS. The helical transmembrane segment at 340-360 threads the bilayer; the sequence is LGNFLVMAWNFVTSLVAIPLA. The Cytoplasmic segment spans residues 361-368; that stretch reads SRFTMRQM. Residues 369–389 form a helical membrane-spanning segment; it reads FITCSFVASCMCLFLCGIPVF. Residues 390 to 404 lie on the Extracellular side of the membrane; the sequence is PGVAEEKVKNGVATT. Residues 405-425 form a helical membrane-spanning segment; it reads GIALFIAAFEFGVGSCFFVLA. Residues 426–439 are Cytoplasmic-facing; it reads QDLFPPSFRPKGSS. Residues 440–460 traverse the membrane as a helical segment; the sequence is FVVMMQFIFNILINLLYPITT. Residues 461-476 lie on the Extracellular side of the membrane; that stretch reads EAISGGATGDQDKGQA. The helical transmembrane segment at 477-497 threads the bilayer; it reads VVFILFGLIGLICFVLQFFYL. The Cytoplasmic portion of the chain corresponds to 498 to 529; sequence YPYDANQDHENDHGTEPVERILSPVDVPTPRN. The segment at 508 to 529 is disordered; the sequence is NDHGTEPVERILSPVDVPTPRN.

This sequence belongs to the major facilitator superfamily. Sugar transporter (TC 2.A.1.1) family.

The protein localises to the membrane. Functionally, facilitative glucose transporter. The sequence is that of Glucose transporter 2A (THT2A) from Trypanosoma brucei brucei.